We begin with the raw amino-acid sequence, 210 residues long: Glutathione S-transferase P (210 aa).

The GST N-terminal domain maps to 2–81; it reads PPYTVVYFPV…HLGRTLGLYG (80 aa). Tyrosine 4 carries the post-translational modification Phosphotyrosine; by EGFR. Glutathione contacts are provided by residues tyrosine 8, arginine 14, tryptophan 39, lysine 45, and 52 to 53; that span reads QL. The residue at position 62 (threonine 62) is a Phosphothreonine. Residue 65 to 66 coordinates glutathione; it reads QS. Positions 83-204 constitute a GST C-terminal domain; the sequence is DQREAALVDM…ASPEHVNLPI (122 aa). An N6-succinyllysine mark is found at lysine 103 and lysine 116. The residue at position 128 (lysine 128) is an N6-acetyllysine.

It belongs to the GST superfamily. Pi family. In terms of assembly, homodimer. Interacts with CDK5.

The protein localises to the cytoplasm. Its subcellular location is the mitochondrion. It is found in the nucleus. The enzyme catalyses RX + glutathione = an S-substituted glutathione + a halide anion + H(+). The catalysed reaction is prostaglandin J2 + glutathione = prostaglandin J2-S-(R)-glutathione. It catalyses the reaction prostaglandin J2 + glutathione = prostaglandin J2-S-(S)-glutathione. It carries out the reaction prostaglandin A2 + glutathione = prostaglandin A2-S-(S)-glutathione. The enzyme catalyses 11(S)-hydroxy-14(S),15(S)-epoxy-(5Z,8Z,12E)-eicosatrienoate + glutathione = (11S,15S)-dihydroxy-14(R)-S-glutathionyl-(5Z,8Z,12E)-eicosatrienoate. Its function is as follows. Conjugation of reduced glutathione to a wide number of exogenous and endogenous hydrophobic electrophiles. Involved in the formation of glutathione conjugates of both prostaglandin A2 (PGA2) and prostaglandin J2 (PGJ2). Participates in the formation of novel hepoxilin regioisomers. Negatively regulates CDK5 activity via p25/p35 translocation to prevent neurodegeneration. The polypeptide is Glutathione S-transferase P (GSTP1) (Pongo abelii (Sumatran orangutan)).